A 183-amino-acid chain; its full sequence is Acireductone dioxygenase (183 aa).

Fe(2+)-binding residues include histidine 99, histidine 101, glutamate 105, and histidine 144. Residues histidine 99, histidine 101, glutamate 105, and histidine 144 each coordinate Ni(2+).

The protein belongs to the acireductone dioxygenase (ARD) family. As to quaternary structure, monomer. The cofactor is Fe(2+). It depends on Ni(2+) as a cofactor.

The enzyme catalyses 1,2-dihydroxy-5-(methylsulfanyl)pent-1-en-3-one + O2 = 3-(methylsulfanyl)propanoate + CO + formate + 2 H(+). It carries out the reaction 1,2-dihydroxy-5-(methylsulfanyl)pent-1-en-3-one + O2 = 4-methylsulfanyl-2-oxobutanoate + formate + 2 H(+). The protein operates within amino-acid biosynthesis; L-methionine biosynthesis via salvage pathway; L-methionine from S-methyl-5-thio-alpha-D-ribose 1-phosphate: step 5/6. Functionally, catalyzes 2 different reactions between oxygen and the acireductone 1,2-dihydroxy-3-keto-5-methylthiopentene (DHK-MTPene) depending upon the metal bound in the active site. Fe-containing acireductone dioxygenase (Fe-ARD) produces formate and 2-keto-4-methylthiobutyrate (KMTB), the alpha-ketoacid precursor of methionine in the methionine recycle pathway. Ni-containing acireductone dioxygenase (Ni-ARD) produces methylthiopropionate, carbon monoxide and formate, and does not lie on the methionine recycle pathway. This chain is Acireductone dioxygenase, found in Microcystis aeruginosa (strain NIES-843 / IAM M-2473).